The following is a 155-amino-acid chain: Protein-export protein SecB (155 aa).

Belongs to the SecB family. Homotetramer, a dimer of dimers. One homotetramer interacts with 1 SecA dimer.

It is found in the cytoplasm. In terms of biological role, one of the proteins required for the normal export of preproteins out of the cell cytoplasm. It is a molecular chaperone that binds to a subset of precursor proteins, maintaining them in a translocation-competent state. It also specifically binds to its receptor SecA. This chain is Protein-export protein SecB, found in Methylococcus capsulatus (strain ATCC 33009 / NCIMB 11132 / Bath).